The sequence spans 242 residues: Host range factor p28 (242 aa).

The region spanning 21 to 131 (YIDEPNDIRL…QSILRGLVNW (111 aa)) is the KilA-N domain. Residues 173 to 226 (CGICYEVVYSKRLENDRYFGLLDSCNHIFCITCINIWHRTRRETGASDNCPICR) form an RING-type zinc finger.

It belongs to the orthopoxvirus OPG021 family.

The protein localises to the host cytoplasm. It catalyses the reaction S-ubiquitinyl-[E2 ubiquitin-conjugating enzyme]-L-cysteine + [acceptor protein]-L-lysine = [E2 ubiquitin-conjugating enzyme]-L-cysteine + N(6)-ubiquitinyl-[acceptor protein]-L-lysine.. In terms of biological role, RING-finger E3 ubiquitin ligase which catalyzes the formation of both 'Lys-48'- and 'Lys-63'-linked polyubiquitin chains. Plays an important role in virulence by acting as an anti-apoptotic factor. This Monkeypox virus protein is Host range factor p28 (OPG021).